A 235-amino-acid polypeptide reads, in one-letter code: Proteasome subunit alpha (235 aa).

This sequence belongs to the peptidase T1A family. The 20S proteasome core is composed of 14 alpha and 14 beta subunits that assemble into four stacked heptameric rings, resulting in a barrel-shaped structure. The two inner rings, each composed of seven catalytic beta subunits, are sandwiched by two outer rings, each composed of seven alpha subunits. The catalytic chamber with the active sites is on the inside of the barrel. Has a gated structure, the ends of the cylinder being occluded by the N-termini of the alpha-subunits. Is capped by the proteasome-associated ATPase, ARC.

It localises to the cytoplasm. It participates in protein degradation; proteasomal Pup-dependent pathway. With respect to regulation, the formation of the proteasomal ATPase ARC-20S proteasome complex, likely via the docking of the C-termini of ARC into the intersubunit pockets in the alpha-rings, may trigger opening of the gate for substrate entry. Interconversion between the open-gate and close-gate conformations leads to a dynamic regulation of the 20S proteasome proteolysis activity. Functionally, component of the proteasome core, a large protease complex with broad specificity involved in protein degradation. In Arthrobacter sp. (strain FB24), this protein is Proteasome subunit alpha.